Consider the following 975-residue polypeptide: 26S proteasome non-ATPase regulatory subunit 1 (975 aa).

A disordered region spans residues 272-303 (EKKSTTTTTTTPASDSMEIDIDSGNEKSGGSS). PC repeat units follow at residues 393 to 426 (SAIS…NQTP), 431 to 464 (GSLY…ILHH), 465 to 499 (GASL…VSGE), 500 to 534 (AAGL…EKTI), 536 to 569 (SLSM…LIRY), 570 to 605 (GGMY…SVRR), 606 to 638 (AAVT…PHVR), 640 to 674 (GAAF…YVKQ), 675 to 715 (AAWI…DSMS), and 718 to 748 (GAVL…NMNA). Disordered regions lie at residues 832 to 882 (SSRS…KSNP) and 922 to 975 (PEQL…EFTE). 2 stretches are compositionally biased toward basic and acidic residues: residues 842–880 (DVEK…ERKS) and 926–935 (VVKEKPETKQ). A compositionally biased stretch (low complexity) spans 944–961 (TATATASLPNATTTTSPT).

This sequence belongs to the proteasome subunit S1 family.

Functionally, acts as a regulatory subunit of the 26 proteasome which is involved in the ATP-dependent degradation of ubiquitinated proteins. In Dictyostelium discoideum (Social amoeba), this protein is 26S proteasome non-ATPase regulatory subunit 1 (psmD1).